The sequence spans 81 residues: Probable antimicrobial peptide Con13 (81 aa).

The signal sequence occupies residues 1–22; it reads MNRKLLLVFLVVAMLVMQPAEA. A propeptide spanning residues 66-81 is cleaved from the precursor; it reads EAGQIPFDEFMDVLYS.

It belongs to the non-disulfide-bridged peptide (NDBP) superfamily. Long chain multifunctional peptide (group 2) family. As to expression, expressed by the venom gland.

Its subcellular location is the secreted. It localises to the target cell membrane. Functionally, at high concentrations, acts as a pore former in cellular membranes and causes the leakage of the cells. At submicromolar concentrations, degranulates granulocytes and has a weak hemolytic activity against human erythrocytes. Also strongly inhibits the production of superoxide anions. Has a strong antibacterial activity against Gram-negative bacteria but is less active against Gram-positive bacteria. Also has antifungal activity. This chain is Probable antimicrobial peptide Con13, found in Opisthacanthus cayaporum (South American scorpion).